The primary structure comprises 659 residues: Cysteine-rich receptor-like protein kinase 7 (659 aa).

Residues 1 to 23 (MSSLFPFIFLFLFSFLTSFRASA) form the signal peptide. Over 24 to 273 (QDPRFLAYYC…SLSDKSGNSN (250 aa)) the chain is Extracellular. 2 consecutive Gnk2-homologous domains span residues 27–131 (RFLA…HKNI) and 142–244 (FILR…LYDF). Residues N35, N42, N60, N69, and N103 are each glycosylated (N-linked (GlcNAc...) asparagine). N-linked (GlcNAc...) asparagine glycosylation occurs at N246. The helical transmembrane segment at 274–294 (VVVVAVVVPIIVAVLIFIAGY) threads the bilayer. At 295–659 (CFFAKRAKKT…DKSMSDLDPR (365 aa)) the chain is on the cytoplasmic side. The Protein kinase domain occupies 336-622 (FSENNKIGRG…ALPAPQQPGF (287 aa)). ATP is bound by residues 342–350 (IGRGGFGDV) and K364. Residue Y409 is modified to Phosphotyrosine. D461 serves as the catalytic Proton acceptor. A Phosphoserine modification is found at S465. T501 carries the phosphothreonine modification. Phosphotyrosine is present on Y509. Residues 626–659 (SRPGTNRLDSDQSTTNKSVTVSIDDKSMSDLDPR) are disordered. Positions 636–646 (DQSTTNKSVTV) are enriched in polar residues. A compositionally biased stretch (basic and acidic residues) spans 648–659 (IDDKSMSDLDPR).

It belongs to the protein kinase superfamily. Ser/Thr protein kinase family. CRK subfamily.

It is found in the membrane. It catalyses the reaction L-seryl-[protein] + ATP = O-phospho-L-seryl-[protein] + ADP + H(+). The enzyme catalyses L-threonyl-[protein] + ATP = O-phospho-L-threonyl-[protein] + ADP + H(+). The protein is Cysteine-rich receptor-like protein kinase 7 (CRK7) of Arabidopsis thaliana (Mouse-ear cress).